We begin with the raw amino-acid sequence, 488 residues long: MSFNNQSIDQLHDFLVKKEISATELTKATLEDIHAREQAVGSFITISDEMAIAQAKEIDDKGIDADNVMSGIPLAVKDNISTKGILTTAASKMLYNYEPIFDATAVEKLYAKDMIVIGKANMDEFAMGGSTETSYFKKTNNAWDHSKVPGGSSGGSAAAVASGQVRLSLGSDTGGSIRQPASFNGIVGMKPTYGRVSRFGLFAFGSSLDQIGPMSQTVKENAQLLTVISGHDVRDSTSSERTVGDFTAKIGQDIQGMKIALPKEYLGEGIAQGVKETIIKAAKHLEKLGAVIEEVSLPHSKYGVAVYYIVASSEASSNLQRFDGIRYGYRTENYKNLDDIYVNTRSEGFGDEVKRRIMLGTFSLSSGYYDAYYKKAGQVRSLIIQDFEKVFADYDLILGPTAPTTAFDLDSLNHDPVAMYLADILTIPVNLAGLPGISIPAGFDQGLPVGMQLIGPKFSEETIYQVAAAFEATTDYHKQQPKIFGGEN.

Catalysis depends on charge relay system residues Lys-77 and Ser-152. Ser-176 serves as the catalytic Acyl-ester intermediate.

The protein belongs to the amidase family. GatA subfamily. In terms of assembly, heterotrimer of A, B and C subunits.

It carries out the reaction L-glutamyl-tRNA(Gln) + L-glutamine + ATP + H2O = L-glutaminyl-tRNA(Gln) + L-glutamate + ADP + phosphate + H(+). In terms of biological role, allows the formation of correctly charged Gln-tRNA(Gln) through the transamidation of misacylated Glu-tRNA(Gln) in organisms which lack glutaminyl-tRNA synthetase. The reaction takes place in the presence of glutamine and ATP through an activated gamma-phospho-Glu-tRNA(Gln). This is Glutamyl-tRNA(Gln) amidotransferase subunit A from Streptococcus agalactiae serotype Ia (strain ATCC 27591 / A909 / CDC SS700).